Consider the following 55-residue polypeptide: ATP synthase F(0) complex subunit 8 (55 aa).

Residues 10–32 (FFIMLASWLTFSLIIQPKLLTFV) traverse the membrane as a helical segment.

This sequence belongs to the ATPase protein 8 family. Component of the ATP synthase complex composed at least of ATP5F1A/subunit alpha, ATP5F1B/subunit beta, ATP5MC1/subunit c (homooctomer), MT-ATP6/subunit a, MT-ATP8/subunit 8, ATP5ME/subunit e, ATP5MF/subunit f, ATP5MG/subunit g, ATP5MK/subunit k, ATP5MJ/subunit j, ATP5F1C/subunit gamma, ATP5F1D/subunit delta, ATP5F1E/subunit epsilon, ATP5PF/subunit F6, ATP5PB/subunit b, ATP5PD/subunit d, ATP5PO/subunit OSCP. ATP synthase complex consists of a soluble F(1) head domain (subunits alpha(3) and beta(3)) - the catalytic core - and a membrane F(0) domain - the membrane proton channel (subunits c, a, 8, e, f, g, k and j). These two domains are linked by a central stalk (subunits gamma, delta, and epsilon) rotating inside the F1 region and a stationary peripheral stalk (subunits F6, b, d, and OSCP).

The protein resides in the mitochondrion membrane. Subunit 8, of the mitochondrial membrane ATP synthase complex (F(1)F(0) ATP synthase or Complex V) that produces ATP from ADP in the presence of a proton gradient across the membrane which is generated by electron transport complexes of the respiratory chain. ATP synthase complex consist of a soluble F(1) head domain - the catalytic core - and a membrane F(1) domain - the membrane proton channel. These two domains are linked by a central stalk rotating inside the F(1) region and a stationary peripheral stalk. During catalysis, ATP synthesis in the catalytic domain of F(1) is coupled via a rotary mechanism of the central stalk subunits to proton translocation. In vivo, can only synthesize ATP although its ATP hydrolase activity can be activated artificially in vitro. Part of the complex F(0) domain. The chain is ATP synthase F(0) complex subunit 8 from Loxigilla noctis (Lesser Antillean bullfinch).